The following is a 200-amino-acid chain: Large ribosomal subunit protein bL25 (200 aa).

Residues 1–20 form a disordered region; sequence MEARELKANVRKESGKEQAR.

Belongs to the bacterial ribosomal protein bL25 family. CTC subfamily. As to quaternary structure, part of the 50S ribosomal subunit; part of the 5S rRNA/L5/L18/L25 subcomplex. Contacts the 5S rRNA. Binds to the 5S rRNA independently of L5 and L18.

Its function is as follows. This is one of the proteins that binds to the 5S RNA in the ribosome where it forms part of the central protuberance. In Syntrophus aciditrophicus (strain SB), this protein is Large ribosomal subunit protein bL25.